The primary structure comprises 172 residues: Acetolactate synthase small subunit (172 aa).

Positions Thr4 to Glu78 constitute an ACT domain.

Belongs to the acetolactate synthase small subunit family. Dimer of large and small chains.

The protein localises to the plastid. It localises to the chloroplast. The enzyme catalyses 2 pyruvate + H(+) = (2S)-2-acetolactate + CO2. Its pathway is amino-acid biosynthesis; L-isoleucine biosynthesis; L-isoleucine from 2-oxobutanoate: step 1/4. It participates in amino-acid biosynthesis; L-valine biosynthesis; L-valine from pyruvate: step 1/4. This chain is Acetolactate synthase small subunit (ilvH), found in Cyanidium caldarium (Red alga).